The sequence spans 955 residues: Kinesin heavy chain isoform 5C (955 aa).

The Kinesin motor domain occupies 8–327 (SIKVMCRFRP…LMFGQRAKTI (320 aa)). 8 residues coordinate ATP: Gln-87, Ser-89, Ser-90, Gly-91, Lys-92, Thr-93, His-94, and Lys-99. The tract at residues 174 to 315 (VSSPEEVMDV…PSVFNEAETK (142 aa)) is microtubule-binding. Residues 332–366 (SVNLELTAEEWKKKYEKEKEKNKALKSVIQHLEVE) are a coiled coil. The residue at position 403 (Thr-403) is a Phosphothreonine. Coiled-coil stretches lie at residues 413-538 (KEKY…LQEL) and 590-913 (ISKM…KNMA). The interval 859–955 (CELPKLEKRL…GSSNSTHYQK (97 aa)) is globular. Residues 909 to 955 (AKNMARRAHSAQIAKPIRPGHYPASSPTAVHAVRGGGGSSNSTHYQK) are disordered.

Belongs to the TRAFAC class myosin-kinesin ATPase superfamily. Kinesin family. Kinesin subfamily. In terms of assembly, oligomer composed of two heavy chains and two light chains. Interacts with GRIP1. Interacts with TRAK1. Interacts with ZFYVE27. Interacts with KLC3.

It localises to the cytoplasm. It is found in the cytoskeleton. The protein resides in the cell projection. Its subcellular location is the dendrite. The enzyme catalyses ATP + H2O = ADP + phosphate + H(+). Functionally, microtubule-associated force-producing protein that may play a role in organelle transport. Has ATPase activity. Involved in synaptic transmission. Mediates dendritic trafficking of mRNAs. Required for anterograde axonal transportation of MAPK8IP3/JIP3 which is essential for MAPK8IP3/JIP3 function in axon elongation. The polypeptide is Kinesin heavy chain isoform 5C (Kif5c) (Rattus norvegicus (Rat)).